Here is a 159-residue protein sequence, read N- to C-terminus: MGGLKKPKKKYLEGKPKKIWNKQLLLEELQLVGEYGLRNKKELWLARAHLKWIVRRARSLLSMTPEERAPLELPFKEKLYKMGFIEDPNVPLDRILSLDVRAILERRLQTIVYRKGLAKSIYHARQLVVHGHVAVAGRRVTSPGFLVPRDLEDKITLIE.

The S4 RNA-binding domain maps to 106–158 (RRLQTIVYRKGLAKSIYHARQLVVHGHVAVAGRRVTSPGFLVPRDLEDKITLI).

It belongs to the universal ribosomal protein uS4 family. As to quaternary structure, part of the 30S ribosomal subunit. Contacts protein S5. The interaction surface between S4 and S5 is involved in control of translational fidelity.

Functionally, one of the primary rRNA binding proteins, it binds directly to 16S rRNA where it nucleates assembly of the body of the 30S subunit. With S5 and S12 plays an important role in translational accuracy. This Pyrobaculum islandicum (strain DSM 4184 / JCM 9189 / GEO3) protein is Small ribosomal subunit protein uS4.